A 208-amino-acid chain; its full sequence is GTP cyclohydrolase 1 (208 aa).

Cysteine 89, histidine 92, and cysteine 163 together coordinate Zn(2+).

The protein belongs to the GTP cyclohydrolase I family. Homomer.

The enzyme catalyses GTP + H2O = 7,8-dihydroneopterin 3'-triphosphate + formate + H(+). It functions in the pathway cofactor biosynthesis; 7,8-dihydroneopterin triphosphate biosynthesis; 7,8-dihydroneopterin triphosphate from GTP: step 1/1. The protein is GTP cyclohydrolase 1 of Saccharolobus islandicus (strain L.S.2.15 / Lassen #1) (Sulfolobus islandicus).